Here is a 1214-residue protein sequence, read N- to C-terminus: Lysine-specific demethylase 3A (1214 aa).

Residues S150 and S209 each carry the phosphoserine modification. The span at 194–211 (TPSSNRQQNTPQAANSPP) shows a compositional bias: polar residues. Disordered stretches follow at residues 194-215 (TPSS…NIGA), 271-293 (PKGS…STPQ), and 310-398 (KAEL…KSVL). S330 carries the phosphoserine modification. Polar residues predominate over residues 361 to 370 (LGSQSQNLKE). Residues 371–380 (TSVKVDHDSC) show a composition bias toward basic and acidic residues. Positions 381–391 (CTRSSNKTQTP) are enriched in polar residues. A C6-type zinc finger spans residues 546 to 571 (CDVCDTTIFNLHWVCPRCGFGVCVDC). The LXXLL motif signature appears at 769–773 (LRNLL). K779 is modified (N6-acetyllysine). The region spanning 944–1167 (MPSRFDDLMA…HCFWLTQEFR (224 aa)) is the JmjC domain. 3 residues coordinate Fe cation: H1006, D1008, and H1135.

The protein belongs to the JHDM2 histone demethylase family. As to quaternary structure, interacts with VRK1. Requires Fe(2+) as cofactor. As to expression, testis specific. Expressed only in male germ cells.

The protein resides in the cytoplasm. It localises to the nucleus. It carries out the reaction N(6),N(6)-dimethyl-L-lysyl(9)-[histone H3] + 2 2-oxoglutarate + 2 O2 = L-lysyl(9)-[histone H3] + 2 formaldehyde + 2 succinate + 2 CO2. Histone demethylase that specifically demethylates 'Lys-9' of histone H3, thereby playing a central role in histone code. Preferentially demethylates mono- and dimethylated H3 'Lys-9' residue, with a preference for dimethylated residue, while it has weak or no activity on trimethylated H3 'Lys-9'. Demethylation of Lys residue generates formaldehyde and succinate. Involved in hormone-dependent transcriptional activation, by participating in recruitment to androgen-receptor target genes, resulting in H3 'Lys-9' demethylation and transcriptional activation. Involved in spermatogenesis by regulating expression of target genes such as PRM1 and TNP1 which are required for packaging and condensation of sperm chromatin. Directly regulates expression of PPARA and UCP1 and is involved in obesity resistance. The polypeptide is Lysine-specific demethylase 3A (Kdm3a) (Rattus norvegicus (Rat)).